We begin with the raw amino-acid sequence, 581 residues long: DEAD-box ATP-dependent RNA helicase 22 (581 aa).

Residues 80 to 108 carry the Q motif motif; sequence VSWKSLGLSDNVSIALRDSGFDRPSLTQA. Positions 111-380 constitute a Helicase ATP-binding domain; that stretch reads IPSILSGKDV…GGILKHMFQD (270 aa). Position 124–131 (124–131) interacts with ATP; sequence AETGSGKT. The DEAD box signature appears at 244-247; the sequence is DEAD. The region spanning 408-566 is the Helicase C-terminal domain; the sequence is QVDALIEAVK…GFRNKVKKRA (159 aa).

Belongs to the DEAD box helicase family.

It catalyses the reaction ATP + H2O = ADP + phosphate + H(+). This Arabidopsis thaliana (Mouse-ear cress) protein is DEAD-box ATP-dependent RNA helicase 22 (RH22).